We begin with the raw amino-acid sequence, 357 residues long: Fructose-1,6-bisphosphatase class 1 2 (357 aa).

Residues glutamate 90, aspartate 112, leucine 114, and aspartate 115 each contribute to the Mg(2+) site. Substrate contacts are provided by residues 115 to 118 (DGSS) and asparagine 206. Mg(2+) is bound at residue glutamate 278.

This sequence belongs to the FBPase class 1 family. In terms of assembly, homotetramer. Requires Mg(2+) as cofactor.

It is found in the cytoplasm. The catalysed reaction is beta-D-fructose 1,6-bisphosphate + H2O = beta-D-fructose 6-phosphate + phosphate. The protein operates within carbohydrate biosynthesis; gluconeogenesis. In Dechloromonas aromatica (strain RCB), this protein is Fructose-1,6-bisphosphatase class 1 2.